A 446-amino-acid chain; its full sequence is Phosphoglucosamine mutase (446 aa).

The Phosphoserine intermediate role is filled by serine 103. Mg(2+) contacts are provided by serine 103, aspartate 242, aspartate 244, and aspartate 246. At serine 103 the chain carries Phosphoserine.

The protein belongs to the phosphohexose mutase family. Mg(2+) serves as cofactor. In terms of processing, activated by phosphorylation.

It catalyses the reaction alpha-D-glucosamine 1-phosphate = D-glucosamine 6-phosphate. Catalyzes the conversion of glucosamine-6-phosphate to glucosamine-1-phosphate. This chain is Phosphoglucosamine mutase, found in Vibrio cholerae serotype O1 (strain ATCC 39315 / El Tor Inaba N16961).